Here is an 83-residue protein sequence, read N- to C-terminus: Putative defensin-like protein 110 (83 aa).

An N-terminal signal peptide occupies residues 1–24; the sequence is MAITKKNLIAFVFTILFVISYVHC. 4 disulfides stabilise this stretch: C43–C81, C49–C73, C59–C79, and C63–C80.

It belongs to the DEFL family.

The protein resides in the secreted. This Arabidopsis thaliana (Mouse-ear cress) protein is Putative defensin-like protein 110.